The primary structure comprises 102 residues: Vacuolar ATPase assembly integral membrane protein VMA21 homolog (102 aa).

The Cytoplasmic portion of the chain corresponds to 1–33 (MTTSSSSEPSTMATLFPNFRDQEVQSAVKNLLT). Residues 34-54 (YSLVILIVPLASMFLLKQFFF) form a helical membrane-spanning segment. The Lumenal segment spans residues 55–67 (EGLLGVSANDALT). Residues 68–88 (YSAIIAVVLVHVVLGIWLFAA) traverse the membrane as a helical segment. The Cytoplasmic portion of the chain corresponds to 89-102 (TKQEDRKKRENKQD).

It belongs to the VMA21 family.

It is found in the endoplasmic reticulum membrane. The protein localises to the endoplasmic reticulum-Golgi intermediate compartment membrane. It localises to the cytoplasmic vesicle. Its subcellular location is the COPII-coated vesicle membrane. Required for the assembly of the V0 complex of the vacuolar ATPase (V-ATPase) in the endoplasmic reticulum. The polypeptide is Vacuolar ATPase assembly integral membrane protein VMA21 homolog (Caenorhabditis elegans).